Consider the following 134-residue polypeptide: uncharacterized protein (134 aa).

The next 3 helical transmembrane spans lie at 26 to 46, 55 to 75, and 101 to 121; these read VAVF…GNIG, LLKF…QIIV, and YAPM…GLIL.

The protein localises to the membrane. This is an uncharacterized protein from Dictyostelium discoideum (Social amoeba).